We begin with the raw amino-acid sequence, 179 residues long: Protein LDB18 (179 aa).

May be involved in protein-linked oligosaccharide phosphorylation since the deletion reduces the negative charge of the cell surface. This is Protein LDB18 (LDB18) from Saccharomyces cerevisiae (strain ATCC 204508 / S288c) (Baker's yeast).